We begin with the raw amino-acid sequence, 242 residues long: uncharacterized protein (242 aa).

Residues 2–62 (EKAYKLLSVQ…VEKPSVIFED (61 aa)) enclose the S4 RNA-binding domain. The active site involves Asp93.

This sequence belongs to the pseudouridine synthase RluA family.

The enzyme catalyses a uridine in RNA = a pseudouridine in RNA. This is an uncharacterized protein from Helicobacter pylori (strain J99 / ATCC 700824) (Campylobacter pylori J99).